Here is a 160-residue protein sequence, read N- to C-terminus: SsrA-binding protein (160 aa).

The disordered stretch occupies residues 135–160 (KTHDKRETIKERDWKREQSRILRDRG). Over residues 138–160 (DKRETIKERDWKREQSRILRDRG) the composition is skewed to basic and acidic residues.

Belongs to the SmpB family.

It localises to the cytoplasm. Functionally, required for rescue of stalled ribosomes mediated by trans-translation. Binds to transfer-messenger RNA (tmRNA), required for stable association of tmRNA with ribosomes. tmRNA and SmpB together mimic tRNA shape, replacing the anticodon stem-loop with SmpB. tmRNA is encoded by the ssrA gene; the 2 termini fold to resemble tRNA(Ala) and it encodes a 'tag peptide', a short internal open reading frame. During trans-translation Ala-aminoacylated tmRNA acts like a tRNA, entering the A-site of stalled ribosomes, displacing the stalled mRNA. The ribosome then switches to translate the ORF on the tmRNA; the nascent peptide is terminated with the 'tag peptide' encoded by the tmRNA and targeted for degradation. The ribosome is freed to recommence translation, which seems to be the essential function of trans-translation. The chain is SsrA-binding protein from Sphingomonas elodea.